The primary structure comprises 132 residues: Small ribosomal subunit protein uS11 (132 aa).

Positions 113-132 (VTPIPHDGTRAPGGKRGRRV) are disordered.

It belongs to the universal ribosomal protein uS11 family. As to quaternary structure, part of the 30S ribosomal subunit.

Functionally, located on the platform of the 30S subunit. This Methanocella arvoryzae (strain DSM 22066 / NBRC 105507 / MRE50) protein is Small ribosomal subunit protein uS11.